Reading from the N-terminus, the 522-residue chain is Cytochrome P450 monooxygenase AKT7 (522 aa).

The helical transmembrane segment at 10 to 30 (LYVTCTVLAALILGYIQAMII) threads the bilayer. Cys-452 is a heme binding site.

Belongs to the cytochrome P450 family. It depends on heme as a cofactor.

It localises to the membrane. The protein operates within mycotoxin biosynthesis. Functionally, cytochrome P450 monooxygenase; part of the gene clusters that mediate the biosynthesis of the host-selective toxins (HSTs) AK-toxins responsible for Japanese pear black spot disease by the Japanese pear pathotype. AK-toxins are esters of 9,10-epoxy 8-hydroxy 9-methyldecatrienoic acid (EDA). On cellular level, AK-toxins affect plasma membrane of susceptible cells and cause a sudden increase in loss of K(+) after a few minutes of toxin treatment. The acyl-CoA ligase AKT1, the hydrolase AKT2 and enoyl-CoA hydratase AKT3 are all involved in the biosynthesis of the AK-, AF- and ACT-toxin common 9,10-epoxy-8-hydroxy-9-methyl-decatrienoic acid (EDA) structural moiety. Part of the EDA biosynthesis occurs in the peroxisome since these 3 enzymes are localized in peroxisomes. The exact roles of the 3 enzymes, as well as of additional AK-toxin clusters enzymes, including AKT4, AKT6 and AKTS1, have still to be elucidated. The Cytochrome P450 monooxygenase AKT7 on the other side functions to limit production of EDA and AK-toxin, probably via the catalysis of a side reaction of EDA or its precursor. The protein is Cytochrome P450 monooxygenase AKT7 of Alternaria alternata (Alternaria rot fungus).